The primary structure comprises 272 residues: Indole-3-glycerol phosphate synthase (272 aa).

The protein belongs to the TrpC family.

The enzyme catalyses 1-(2-carboxyphenylamino)-1-deoxy-D-ribulose 5-phosphate + H(+) = (1S,2R)-1-C-(indol-3-yl)glycerol 3-phosphate + CO2 + H2O. It participates in amino-acid biosynthesis; L-tryptophan biosynthesis; L-tryptophan from chorismate: step 4/5. This is Indole-3-glycerol phosphate synthase from Mycobacterium ulcerans (strain Agy99).